The primary structure comprises 513 residues: Coniferin beta-glucosidase (513 aa).

A signal peptide spans 1 to 23; that stretch reads MEVSVLMWVLLFYSLLGFQVTTA. A beta-D-glucoside-binding positions include Gln-44, His-145, and 190–191; that span reads NE. Catalysis depends on Glu-191, which acts as the Proton donor. Residues Cys-210 and Cys-219 are joined by a disulfide bond. The N-linked (GlcNAc...) asparagine glycan is linked to Asn-223. Residues Tyr-336 and Glu-408 each coordinate a beta-D-glucoside. Glu-408 functions as the Nucleophile in the catalytic mechanism. N-linked (GlcNAc...) asparagine glycosylation is present at Asn-447. Residues Trp-457, 464 to 465, and Phe-473 contribute to the a beta-D-glucoside site; that span reads EW.

Belongs to the glycosyl hydrolase 1 family. In terms of assembly, homodimer. Glycosylated.

The enzyme catalyses 4-O-(beta-D-glucosyl)-(E)-coniferol + H2O = (E)-coniferol + D-glucose. With respect to regulation, inhibited by glucono-1,5-lactone, but not by bromoconduritol or conduritol B epoxide. In terms of biological role, involved in the release of monolignols for lignin biosynthesis. Unable to hydrolyze 4-nitrophenyl beta-cellobioside or alpha-linked methylumbelliferyl glucoside. The sequence is that of Coniferin beta-glucosidase from Pinus contorta (Shore pine).